The sequence spans 399 residues: F-box protein At1g10110 (399 aa).

An F-box domain is found at 9 to 56 (PNWSELVTDILSLVFKHLSFTDFARAKTVCSSWYFASKSSSPRKNHTP).

This chain is F-box protein At1g10110, found in Arabidopsis thaliana (Mouse-ear cress).